The primary structure comprises 245 residues: 1-(5-phosphoribosyl)-5-[(5-phosphoribosylamino)methylideneamino] imidazole-4-carboxamide isomerase (245 aa).

Asp7 serves as the catalytic Proton acceptor. Asp129 serves as the catalytic Proton donor.

Belongs to the HisA/HisF family.

The protein localises to the cytoplasm. It carries out the reaction 1-(5-phospho-beta-D-ribosyl)-5-[(5-phospho-beta-D-ribosylamino)methylideneamino]imidazole-4-carboxamide = 5-[(5-phospho-1-deoxy-D-ribulos-1-ylimino)methylamino]-1-(5-phospho-beta-D-ribosyl)imidazole-4-carboxamide. The protein operates within amino-acid biosynthesis; L-histidine biosynthesis; L-histidine from 5-phospho-alpha-D-ribose 1-diphosphate: step 4/9. In Klebsiella pneumoniae subsp. pneumoniae (strain ATCC 700721 / MGH 78578), this protein is 1-(5-phosphoribosyl)-5-[(5-phosphoribosylamino)methylideneamino] imidazole-4-carboxamide isomerase.